A 267-amino-acid polypeptide reads, in one-letter code: Type II pantothenate kinase (267 aa).

6–13 (DAGGTLIK) is a binding site for ATP. E70 functions as the Proton acceptor in the catalytic mechanism. Residues T99, 121–125 (GGMIQ), Y137, and S225 each bind ATP.

It belongs to the type II pantothenate kinase family. In terms of assembly, homodimer.

It is found in the cytoplasm. The enzyme catalyses (R)-pantothenate + ATP = (R)-4'-phosphopantothenate + ADP + H(+). It functions in the pathway cofactor biosynthesis; coenzyme A biosynthesis; CoA from (R)-pantothenate: step 1/5. Catalyzes the phosphorylation of pantothenate (Pan), the first step in CoA biosynthesis. In Staphylococcus aureus (strain bovine RF122 / ET3-1), this protein is Type II pantothenate kinase.